The chain runs to 638 residues: Eukaryotic translation initiation factor 2A (638 aa).

WD repeat units lie at residues 287 to 329 (SKEG…FDFG) and 331 to 370 (GPRNCAYFNPFGNLIALAGFGNLPGAVEVWDVSKREKLAN). Residues 441-450 (KITKAKHEGI) show a composition bias toward basic and acidic residues. The interval 441–593 (KITKAKHEGI…SDKERKIRSV (153 aa)) is disordered. At Thr463 the chain carries Phosphothreonine. Residues 492–501 (AAAGGVNGNK) show a composition bias toward low complexity. Positions 583 to 593 (ISDKERKIRSV) are enriched in basic and acidic residues.

This sequence belongs to the WD repeat EIF2A family.

Its function is as follows. Functions in the early steps of protein synthesis of a small number of specific mRNAs. Acts by directing the binding of methionyl-tRNAi to 40S ribosomal subunits. In contrast to the eIF-2 complex, it binds methionyl-tRNAi to 40S subunits in a codon-dependent manner, whereas the eIF-2 complex binds methionyl-tRNAi to 40S subunits in a GTP-dependent manner. In Drosophila melanogaster (Fruit fly), this protein is Eukaryotic translation initiation factor 2A.